A 431-amino-acid chain; its full sequence is MKILVIGSGGREHALAWKIAQSARVSEVLVAPGNAGTATEAKCRNVAIKVDDLDGLLALAQREAVALTVVGPEVPLVLGVVDRFHAAGLRIFGPTAKAAQLEGSKAFAKDFLARHGIPTAYYAVHTEVDAALAYVREKGAPIVVKADGLAAGKGVIVAMTLGEAEDAVRDMLSGNAFGDAGARVVIEEFLDGEEASFISMVDGTHALPMATSQDHKRVGDGDTGPNTGGMGAYSPAPVVTPEVHARVMREVVEPTVQGMIADGVPFTGFLYAGLMIDAHGAPKVIEFNVRFGDPETQPVMLRLQSDLVDLVEAAIDGTLDAAQAQWDPRPSLGVVIAAKPYPETPVTGEVITGLDAVPASAKVFHAGTALNAEGQVISAGGRVLCVAALGDSVLDAQRTAYAGLQPIQWASAFQRSDIGWRAIARERDAQA.

One can recognise an ATP-grasp domain in the interval 109–316; the sequence is KDFLARHGIP…LVDLVEAAID (208 aa). Residue 135–196 coordinates ATP; sequence VREKGAPIVV…EEFLDGEEAS (62 aa). Mg(2+)-binding residues include E286 and N288.

It belongs to the GARS family. Mg(2+) serves as cofactor. It depends on Mn(2+) as a cofactor.

It catalyses the reaction 5-phospho-beta-D-ribosylamine + glycine + ATP = N(1)-(5-phospho-beta-D-ribosyl)glycinamide + ADP + phosphate + H(+). Its pathway is purine metabolism; IMP biosynthesis via de novo pathway; N(1)-(5-phospho-D-ribosyl)glycinamide from 5-phospho-alpha-D-ribose 1-diphosphate: step 2/2. The sequence is that of Phosphoribosylamine--glycine ligase from Xanthomonas campestris pv. campestris (strain ATCC 33913 / DSM 3586 / NCPPB 528 / LMG 568 / P 25).